Reading from the N-terminus, the 538-residue chain is Adenine deaminase (538 aa).

This sequence belongs to the metallo-dependent hydrolases superfamily. Adenine deaminase family. Mn(2+) is required as a cofactor.

The enzyme catalyses adenine + H2O + H(+) = hypoxanthine + NH4(+). The polypeptide is Adenine deaminase (Methanothermobacter thermautotrophicus (strain ATCC 29096 / DSM 1053 / JCM 10044 / NBRC 100330 / Delta H) (Methanobacterium thermoautotrophicum)).